Here is a 429-residue protein sequence, read N- to C-terminus: Histidine--tRNA ligase (429 aa).

This sequence belongs to the class-II aminoacyl-tRNA synthetase family. In terms of assembly, homodimer.

It localises to the cytoplasm. The enzyme catalyses tRNA(His) + L-histidine + ATP = L-histidyl-tRNA(His) + AMP + diphosphate + H(+). In Pseudomonas putida (strain GB-1), this protein is Histidine--tRNA ligase.